Reading from the N-terminus, the 774-residue chain is E3 ubiquitin-protein ligase UHRF1 (774 aa).

A Ubiquitin-like domain is found at 1–78 (MWIQVRTMDG…IQLLVRQSLA (78 aa)). 5 positions are modified to phosphoserine: S76, S91, S93, S95, and S161. Residues 83-120 (TKERDSELSDSDSGYGVGHSESDKSSTHGEGTADGDDK) are disordered. 2 tudor-like regions span residues 129-205 (GLYK…ARAR) and 212-280 (DLEV…IELP). A Glycyl lysine isopeptide (Lys-Gly) (interchain with G-Cter in SUMO2) cross-link involves residue K276. S284 bears the Phosphoserine mark. The linker stretch occupies residues 293–298 (RKSGPS). S295 carries the phosphoserine; by PKA modification. The PHD-type zinc-finger motif lies at 296-363 (GPSCQYCKDD…EWYCPSCRTD (68 aa)). Histone H3R2me0 binding stretches follow at residues 330 to 334 (CDECD) and 350 to 352 (PPE). The residue at position 365 (S365) is a Phosphoserine. Residue K382 forms a Glycyl lysine isopeptide (Lys-Gly) (interchain with G-Cter in SUMO2) linkage. Residues 382 to 605 (KMASATSSSR…QLGLTMQYPE (224 aa)) are methyl-CpG binding and interaction with HDAC1. K396 carries the post-translational modification N6-acetyllysine. One can recognise a YDG domain in the interval 416–578 (GPIPGVPVGT…FIVWRYLLRR (163 aa)). The interval 442–443 (HV) is required to promote base flipping. Residues 460 to 461 (AG) and D466 each bind DNA. Required for formation of a 5-methylcytosine-binding pocket regions lie at residues 463–466 (YEDD) and 475–478 (YTGS). S511 is subject to Phosphoserine. At K542 the chain carries N6-acetyllysine; alternate. K542 is covalently cross-linked (Glycyl lysine isopeptide (Lys-Gly) (interchain with G-Cter in SUMO2); alternate). The tract at residues 616–657 (KNRKRPAKALEQGPSSSKIGKSKRKSTGPATTSPRVSKKSKL) is disordered. At S631 the chain carries Phosphoserine; by CDK1. 2 positions are modified to phosphoserine: S641 and S648. A Glycyl lysine isopeptide (Lys-Gly) (interchain with G-Cter in SUMO2) cross-link involves residue K656. The RING-type zinc-finger motif lies at 705-744 (CICCQELVFRPVTTVCQHNVCKDCLDRSFRAQVFSCPACR). At S751 the chain carries Phosphoserine.

As to quaternary structure, interacts with DNMT3A and DNMT3B. Interacts with DNMT1; the interaction is direct. Interacts with USP7; leading to its deubiquitination. Interacts with histone H3. Interacts with HDAC1, but not with HDAC2. Interacts with BLTP3A. Interacts with PML. Interacts with EHMT2. Binds methylated CpG containing oligonucleotides. Interacts with ZNF263; recruited to the SIX3 promoter along with other proteins involved in chromatin modification and transcriptional corepression where it contributes to transcriptional repression. Interacts with UHRF2. Interacts with FANCD2. Interacts with TET1 isoform 2; this interaction induces the recruitment of TET1 isoform 2 to replicating heterochromatin. In terms of processing, phosphorylation at Ser-295 of the linker region decreases the binding to H3K9me3. Phosphorylation at Ser-631 by CDK1 during M phase impairs interaction with USP7, preventing deubiquitination and leading to degradation by the proteasome. Post-translationally, ubiquitinated; which leads to proteasomal degradation. Autoubiquitinated; interaction with USP7 leads to deubiquitination and prevents degradation. Ubiquitination and degradation takes place during M phase, when phosphorylation at Ser-631 prevents interaction with USP7 and subsequent deubiquitination. Polyubiquitination may be stimulated by DNA damage.

The protein resides in the nucleus. The catalysed reaction is S-ubiquitinyl-[E2 ubiquitin-conjugating enzyme]-L-cysteine + [acceptor protein]-L-lysine = [E2 ubiquitin-conjugating enzyme]-L-cysteine + N(6)-ubiquitinyl-[acceptor protein]-L-lysine.. It functions in the pathway protein modification; protein ubiquitination. Multidomain protein that acts as a key epigenetic regulator by bridging DNA methylation and chromatin modification. Specifically recognizes and binds hemimethylated DNA at replication forks via its YDG domain and recruits DNMT1 methyltransferase to ensure faithful propagation of the DNA methylation patterns through DNA replication. In addition to its role in maintenance of DNA methylation, also plays a key role in chromatin modification: through its tudor-like regions and PHD-type zinc fingers, specifically recognizes and binds histone H3 trimethylated at 'Lys-9' (H3K9me3) and unmethylated at 'Arg-2' (H3R2me0), respectively, and recruits chromatin proteins. Enriched in pericentric heterochromatin where it recruits different chromatin modifiers required for this chromatin replication. Also localizes to euchromatic regions where it negatively regulates transcription possibly by impacting DNA methylation and histone modifications. Has E3 ubiquitin-protein ligase activity by mediating the ubiquitination of target proteins such as histone H3 and PML. It is still unclear how E3 ubiquitin-protein ligase activity is related to its role in chromatin in vivo. Plays a role in DNA repair by cooperating with UHRF2 to ensure recruitment of FANCD2 to interstrand cross-links (ICLs) leading to FANCD2 activation. Plays a pivotal role in the establishment of correct spindle architecture by catalyzing the 'Lys-63'-linked ubiquitination of KIF11, thereby controlling KIF11 localization on the spindle. This chain is E3 ubiquitin-protein ligase UHRF1 (Uhrf1), found in Rattus norvegicus (Rat).